The following is a 219-amino-acid chain: MNLDFSATIPQIPFILEGLAITLKIVVVSAIIGLILGIVLSLCKISTFRPFIWIADFYTSVFRGTPLVLQLMIVYFGLPQLLGFQIDQFWAAVVALSLNSAAYVSEIIRAGINAIDKGQKEAAVALGVPYGKMMKDLLLPQAFKNISPAIVNELITLTKESAIVTVIGLGDVMRRAYQAGAATYNYLEPLIIAGLIYYVLVLILTFIGKAVERKLKSND.

The next 5 helical transmembrane spans lie at 19 to 39 (LAITLKIVVVSAIIGLILGIV), 51 to 73 (FIWIADFYTSVFRGTPLVLQLMI), 88 to 108 (QFWAAVVALSLNSAAYVSEII), 149 to 169 (AIVNELITLTKESAIVTVIGL), and 187 to 207 (LEPLIIAGLIYYVLVLILTFI). Residues 19-208 (LAITLKIVVV…VLVLILTFIG (190 aa)) form the ABC transmembrane type-1 domain.

It belongs to the binding-protein-dependent transport system permease family. HisMQ subfamily.

It localises to the cell membrane. Part of a binding-protein-dependent transport system for arginine. Probably responsible for the translocation of the substrate across the membrane. The sequence is that of Arginine transport system permease protein ArtQ (artQ) from Bacillus subtilis (strain 168).